The primary structure comprises 437 residues: Eukaryotic peptide chain release factor subunit 1 (437 aa).

The NIKS motif; plays an important role in translational termination signature appears at 61–64; that stretch reads NIKS.

The protein belongs to the eukaryotic release factor 1 family. Component of the eRF1-eRF3-GTP ternary complex, composed of ETF1/ERF1 and eRF3 (GSPT1/ERF3A or GSPT2/ERF3B) and GTP.

The protein resides in the cytoplasm. In terms of biological role, component of the eRF1-eRF3-GTP ternary complex, a ternary complex that mediates translation termination in response to the termination codons. The eRF1-eRF3-GTP complex binds to a stop codon in the ribosomal A-site. ETF1/ERF1 is responsible for stop codon recognition and inducing hydrolysis of peptidyl-tRNA. Following GTP hydrolysis, eRF3 (GSPT1/ERF3A or GSPT2/ERF3B) dissociates, permitting ETF1/eRF1 to accommodate fully in the A-site, followed by hydrolysis of peptidyl-tRNA. This Xenopus laevis (African clawed frog) protein is Eukaryotic peptide chain release factor subunit 1 (etf1).